The chain runs to 60 residues: UPF0434 protein Dtpsy_1553 (60 aa).

It belongs to the UPF0434 family.

The chain is UPF0434 protein Dtpsy_1553 from Acidovorax ebreus (strain TPSY) (Diaphorobacter sp. (strain TPSY)).